We begin with the raw amino-acid sequence, 325 residues long: Serpentine receptor class delta-59 (325 aa).

Helical transmembrane passes span 14–34 (WYWPFCGVLAIIFQTILLHLI), 45–65 (LKIFLYNTSCVQIALITFAFL), 75–95 (ISAAVLSLGPCSYVSPTTCFI), 97–117 (YHVFMATSFGAGSAIAITVLF), 132–152 (TYIMVLASYIAPLVVLIIPFT), 190–210 (FLSATLLLSIGAYGIPIGCLI), 235–255 (TLIHGLIVQSMLPFISYIPSF), and 275–295 (ILVSSAFPALLDPFISFYFIV).

The protein belongs to the nematode receptor-like protein srd family.

It is found in the membrane. In Caenorhabditis elegans, this protein is Serpentine receptor class delta-59 (srd-59).